The sequence spans 284 residues: 2-dehydro-3-deoxyphosphooctonate aldolase (284 aa).

It belongs to the KdsA family.

It localises to the cytoplasm. It catalyses the reaction D-arabinose 5-phosphate + phosphoenolpyruvate + H2O = 3-deoxy-alpha-D-manno-2-octulosonate-8-phosphate + phosphate. Its pathway is carbohydrate biosynthesis; 3-deoxy-D-manno-octulosonate biosynthesis; 3-deoxy-D-manno-octulosonate from D-ribulose 5-phosphate: step 2/3. It functions in the pathway bacterial outer membrane biogenesis; lipopolysaccharide biosynthesis. In Haemophilus influenzae (strain PittEE), this protein is 2-dehydro-3-deoxyphosphooctonate aldolase.